The following is a 270-amino-acid chain: Formamidopyrimidine-DNA glycosylase (270 aa).

The active-site Schiff-base intermediate with DNA is proline 2. Residue glutamate 3 is the Proton donor of the active site. Lysine 57 acts as the Proton donor; for beta-elimination activity in catalysis. Residues histidine 90, arginine 109, and lysine 150 each contribute to the DNA site. The FPG-type zinc finger occupies 235–269; that stretch reads LVYGNKDKPCPRCGTKIKSIIIGQRNSFFCPQCQK. The active-site Proton donor; for delta-elimination activity is the arginine 259.

This sequence belongs to the FPG family. In terms of assembly, monomer. Requires Zn(2+) as cofactor.

The catalysed reaction is Hydrolysis of DNA containing ring-opened 7-methylguanine residues, releasing 2,6-diamino-4-hydroxy-5-(N-methyl)formamidopyrimidine.. The enzyme catalyses 2'-deoxyribonucleotide-(2'-deoxyribose 5'-phosphate)-2'-deoxyribonucleotide-DNA = a 3'-end 2'-deoxyribonucleotide-(2,3-dehydro-2,3-deoxyribose 5'-phosphate)-DNA + a 5'-end 5'-phospho-2'-deoxyribonucleoside-DNA + H(+). Involved in base excision repair of DNA damaged by oxidation or by mutagenic agents. Acts as a DNA glycosylase that recognizes and removes damaged bases. Has a preference for oxidized purines, such as 7,8-dihydro-8-oxoguanine (8-oxoG). Has AP (apurinic/apyrimidinic) lyase activity and introduces nicks in the DNA strand. Cleaves the DNA backbone by beta-delta elimination to generate a single-strand break at the site of the removed base with both 3'- and 5'-phosphates. The polypeptide is Formamidopyrimidine-DNA glycosylase (Histophilus somni (strain 129Pt) (Haemophilus somnus)).